The following is a 529-amino-acid chain: Bifunctional purine biosynthesis protein PurH (529 aa).

The MGS-like domain maps to 1–148; it reads MNNVRPIRRA…KNHKDTTIVV (148 aa).

This sequence belongs to the PurH family.

The enzyme catalyses (6R)-10-formyltetrahydrofolate + 5-amino-1-(5-phospho-beta-D-ribosyl)imidazole-4-carboxamide = 5-formamido-1-(5-phospho-D-ribosyl)imidazole-4-carboxamide + (6S)-5,6,7,8-tetrahydrofolate. It carries out the reaction IMP + H2O = 5-formamido-1-(5-phospho-D-ribosyl)imidazole-4-carboxamide. Its pathway is purine metabolism; IMP biosynthesis via de novo pathway; 5-formamido-1-(5-phospho-D-ribosyl)imidazole-4-carboxamide from 5-amino-1-(5-phospho-D-ribosyl)imidazole-4-carboxamide (10-formyl THF route): step 1/1. It participates in purine metabolism; IMP biosynthesis via de novo pathway; IMP from 5-formamido-1-(5-phospho-D-ribosyl)imidazole-4-carboxamide: step 1/1. The polypeptide is Bifunctional purine biosynthesis protein PurH (Shewanella frigidimarina (strain NCIMB 400)).